We begin with the raw amino-acid sequence, 344 residues long: Protein-arginine kinase (344 aa).

The Phosphagen kinase C-terminal domain maps to isoleucine 14–alanine 244. ATP contacts are provided by residues serine 17–arginine 21, histidine 81, arginine 115, arginine 166–methionine 170, and arginine 197–glutamate 202.

The protein belongs to the ATP:guanido phosphotransferase family.

It catalyses the reaction L-arginyl-[protein] + ATP = N(omega)-phospho-L-arginyl-[protein] + ADP + H(+). Catalyzes the specific phosphorylation of arginine residues in proteins. In Clostridium novyi (strain NT), this protein is Protein-arginine kinase.